The chain runs to 118 residues: Large ribosomal subunit protein uL18 (118 aa).

The protein belongs to the universal ribosomal protein uL18 family. Part of the 50S ribosomal subunit; part of the 5S rRNA/L5/L18/L25 subcomplex. Contacts the 5S and 23S rRNAs.

In terms of biological role, this is one of the proteins that bind and probably mediate the attachment of the 5S RNA into the large ribosomal subunit, where it forms part of the central protuberance. In Helicobacter hepaticus (strain ATCC 51449 / 3B1), this protein is Large ribosomal subunit protein uL18.